We begin with the raw amino-acid sequence, 339 residues long: Terpene synthase 9 (339 aa).

The DDxx(x)D/E motif signature appears at 79-84 (DDFLES). The short motif at 219–227 (NDCASYAKE) is the NDxxSxxxD/E motif element.

Belongs to the terpene synthase family.

It carries out the reaction (2E,6E)-farnesyl diphosphate = (-)-beta-barbatene + diphosphate. The catalysed reaction is (2E,6E)-farnesyl diphosphate = (E)-beta-farnesene + diphosphate. The enzyme catalyses (2E)-geranyl diphosphate = (Z)-beta-ocimene + diphosphate. It catalyses the reaction (2E)-geranyl diphosphate + H2O = linalool + diphosphate. It carries out the reaction (2E)-geranyl diphosphate = beta-myrcene + diphosphate. Functionally, terpene synthase that converts its substrate farnesyl diphosphate (FPP) into the sesquiterpene beta-barbatene as a major product as well as (E)-beta-farnesene as a minor product. Is also able to convert geranyl diphosphate (GPP) into a mixture of monoterpenes including (Z)-beta-ocimene, linalool, beta-myrcene, limonene and alpha-terpineol. The polypeptide is Terpene synthase 9 (Dictyostelium discoideum (Social amoeba)).